Consider the following 477-residue polypeptide: Inner membrane transporter YgjI (477 aa).

At 1-8 (MSDTKRNT) the chain is on the periplasmic side. A helical transmembrane segment spans residues 9–29 (IGKFGLLSLTFAAVYSFNNVI). The Cytoplasmic portion of the chain corresponds to 30 to 41 (NNNIELGLASAP). Residues 42–62 (MFFLATIFYFIPFCLIIAEFV) traverse the membrane as a helical segment. The Periplasmic portion of the chain corresponds to 63 to 83 (SLNKNSEAGVYAWVKSSLGGR). The chain crosses the membrane as a helical span at residues 84 to 104 (WAFITAYTYWFVNLFFFTSLL). The Cytoplasmic segment spans residues 105-120 (PRVIAYASYAFLGYEY). The helical transmembrane segment at 121–141 (IMTPVATTIISMVLFAFSTWV) threads the bilayer. The Periplasmic segment spans residues 142 to 158 (STNGAKMLGPITSVTST). The helical transmembrane segment at 159–179 (LMLLLTLSYILLAGTALVGGV) threads the bilayer. The Cytoplasmic segment spans residues 180 to 196 (QPADAITVDAMIPNFNW). The helical transmembrane segment at 197–217 (AFLGVTTWIFMAAGGAESVAV) threads the bilayer. Topologically, residues 218-232 (YVNDVKGGSKSFVKV) are periplasmic. Residues 233 to 253 (IILAGIFIGVLYSVSSVLINV) traverse the membrane as a helical segment. The Cytoplasmic portion of the chain corresponds to 254-263 (FVSSKELKFT). The helical transmembrane segment at 264 to 284 (GGSVQVFHGMAAYFGLPEALM) threads the bilayer. At 285–286 (NR) the chain is on the periplasmic side. Residues 287–307 (FVGLVSFTAMFGSLLMWTATP) traverse the membrane as a helical segment. Topologically, residues 308 to 335 (VKIFFSEIPEGIFGKKTVELNENGVPAR) are cytoplasmic. A helical membrane pass occupies residues 336–356 (AAWIQFLIVIPLMIIPMLGSN). The Periplasmic portion of the chain corresponds to 357–364 (TVQDLMNT). A helical membrane pass occupies residues 365–385 (IINMTAAASMLPPLFIMLAYL). The Cytoplasmic segment spans residues 386–405 (NLRAKLDHLPRDFRMGSRRT). Residues 406-426 (GIIVVSMLIAIFAVGFVASTF) form a helical membrane-spanning segment. At 427-431 (PTGAN) the chain is on the periplasmic side. Residues 432-452 (ILTIIFYNVGGIVIFLGFAWW) traverse the membrane as a helical segment. Over 453–477 (KYSKYIKGLTAEERHIEATPASNVD) the chain is Cytoplasmic.

It belongs to the amino acid-polyamine-organocation (APC) superfamily.

The protein localises to the cell inner membrane. The protein is Inner membrane transporter YgjI (ygjI) of Escherichia coli (strain K12).